We begin with the raw amino-acid sequence, 193 residues long: Fe/S biogenesis protein NfuA (193 aa).

[4Fe-4S] cluster-binding residues include C151 and C154.

This sequence belongs to the NfuA family. As to quaternary structure, homodimer. It depends on [4Fe-4S] cluster as a cofactor.

Involved in iron-sulfur cluster biogenesis. Binds a 4Fe-4S cluster, can transfer this cluster to apoproteins, and thereby intervenes in the maturation of Fe/S proteins. Could also act as a scaffold/chaperone for damaged Fe/S proteins. In Buchnera aphidicola subsp. Cinara cedri (strain Cc), this protein is Fe/S biogenesis protein NfuA.